A 372-amino-acid polypeptide reads, in one-letter code: Glutamate 5-kinase (372 aa).

Position 9 (Lys-9) interacts with ATP. 3 residues coordinate substrate: Ser-49, Asp-136, and Asn-148. ATP-binding positions include 168–169 (TD) and 210–216 (TGGMKSK). In terms of domain architecture, PUA spans 276-360 (EGKVFIDDGA…PAIEVIHRDS (85 aa)).

This sequence belongs to the glutamate 5-kinase family.

The protein resides in the cytoplasm. The catalysed reaction is L-glutamate + ATP = L-glutamyl 5-phosphate + ADP. It participates in amino-acid biosynthesis; L-proline biosynthesis; L-glutamate 5-semialdehyde from L-glutamate: step 1/2. Functionally, catalyzes the transfer of a phosphate group to glutamate to form L-glutamate 5-phosphate. The sequence is that of Glutamate 5-kinase from Oceanobacillus iheyensis (strain DSM 14371 / CIP 107618 / JCM 11309 / KCTC 3954 / HTE831).